A 75-amino-acid chain; its full sequence is Ferredoxin-thioredoxin reductase, variable chain (75 aa).

Positions 43 to 46 (QGRP) are interaction with ferredoxin.

It belongs to the ferredoxin thioredoxin reductase alpha subunit family. In terms of assembly, heterodimer of subunit A (variable subunit) and subunit B (catalytic subunit). Heterodimeric FTR forms a complex with ferredoxin and thioredoxin.

Variable subunit of the ferredoxin-thioredoxin reductase (FTR), which catalyzes the two-electron reduction of thioredoxins by the electrons provided by reduced ferredoxin. This chain is Ferredoxin-thioredoxin reductase, variable chain (ftrV), found in Synechocystis sp. (strain ATCC 27184 / PCC 6803 / Kazusa).